A 495-amino-acid chain; its full sequence is Putative aldehyde dehydrogenase AldA (495 aa).

Residue 212–218 participates in NAD(+) binding; the sequence is GKGSESG. Active-site residues include Glu256 and Cys290.

It belongs to the aldehyde dehydrogenase family.

The enzyme catalyses an aldehyde + NAD(+) + H2O = a carboxylate + NADH + 2 H(+). In Staphylococcus aureus (strain Mu50 / ATCC 700699), this protein is Putative aldehyde dehydrogenase AldA (aldA).